A 111-amino-acid chain; its full sequence is Universal stress protein B (111 aa).

The next 2 membrane-spanning stretches (helical) occupy residues 1-21 and 90-110; these read MISTVALFWALCVVCVINMAR and FILTSALCGLVMVSLVGLILW.

It belongs to the universal stress protein B family.

The protein resides in the cell inner membrane. The sequence is that of Universal stress protein B from Yersinia enterocolitica serotype O:8 / biotype 1B (strain NCTC 13174 / 8081).